A 638-amino-acid polypeptide reads, in one-letter code: Probable lysine-specific demethylase 4F (638 aa).

One can recognise a JmjN domain in the interval 15–57; that stretch reads IMTFYPTMEEFADFNTYVAYMESQGAHRAGLAKVIPPKEWKAR. Position 133 (tyrosine 133) interacts with 2-oxoglutarate. Residues 143–309 form the JmjC domain; sequence EESTKQWNLG…YGKVASQCSC (167 aa). Residues histidine 189 and glutamate 191 each coordinate Fe cation. 2-oxoglutarate-binding residues include asparagine 199 and lysine 207. 2 residues coordinate Zn(2+): cysteine 235 and histidine 241. Lysine 242 is a binding site for 2-oxoglutarate. Histidine 277 contributes to the Fe cation binding site. Zn(2+) is bound by residues cysteine 307 and cysteine 309. The disordered stretch occupies residues 426-474; that stretch reads PCRGCGRGRGRGRGRGRRPRELGTEETTVQSAAKRRLSVGTGSRAPGRK. Residues 431–443 are compositionally biased toward basic residues; sequence GRGRGRGRGRGRR.

It belongs to the JHDM3 histone demethylase family. Fe(2+) is required as a cofactor.

It is found in the nucleus. It catalyses the reaction N(6),N(6),N(6)-trimethyl-L-lysyl(9)-[histone H3] + 2 2-oxoglutarate + 2 O2 = N(6)-methyl-L-lysyl(9)-[histone H3] + 2 formaldehyde + 2 succinate + 2 CO2. Its function is as follows. Probable histone demethylase that specifically demethylates 'Lys-9' of histone H3, thereby playing a central role in histone code. This is Probable lysine-specific demethylase 4F from Homo sapiens (Human).